Reading from the N-terminus, the 459-residue chain is Argininosuccinate lyase (459 aa).

This sequence belongs to the lyase 1 family. Argininosuccinate lyase subfamily.

The protein resides in the cytoplasm. It catalyses the reaction 2-(N(omega)-L-arginino)succinate = fumarate + L-arginine. The protein operates within amino-acid biosynthesis; L-arginine biosynthesis; L-arginine from L-ornithine and carbamoyl phosphate: step 3/3. In Geobacillus kaustophilus (strain HTA426), this protein is Argininosuccinate lyase.